Reading from the N-terminus, the 130-residue chain is Small ribosomal subunit protein uS9 (130 aa).

This sequence belongs to the universal ribosomal protein uS9 family.

In Pseudomonas entomophila (strain L48), this protein is Small ribosomal subunit protein uS9.